The following is a 489-amino-acid chain: Ketol-acid reductoisomerase (NADP(+)) (489 aa).

The KARI N-terminal Rossmann domain maps to 16 to 207 (LRKCKLVEKN…GSHRAGVLHS (192 aa)). NADP(+) is bound by residues 44 to 47 (CGSQ), R67, S77, and 107 to 109 (DKQ). The active site involves H131. G157 is a binding site for NADP(+). KARI C-terminal knotted domains are found at residues 208 to 343 (SFIA…KCKI) and 344 to 483 (CHKE…MVDM). D216, E220, E388, and E392 together coordinate Mg(2+). S413 is a binding site for substrate.

This sequence belongs to the ketol-acid reductoisomerase family. Requires Mg(2+) as cofactor.

It carries out the reaction (2R)-2,3-dihydroxy-3-methylbutanoate + NADP(+) = (2S)-2-acetolactate + NADPH + H(+). The enzyme catalyses (2R,3R)-2,3-dihydroxy-3-methylpentanoate + NADP(+) = (S)-2-ethyl-2-hydroxy-3-oxobutanoate + NADPH + H(+). It functions in the pathway amino-acid biosynthesis; L-isoleucine biosynthesis; L-isoleucine from 2-oxobutanoate: step 2/4. The protein operates within amino-acid biosynthesis; L-valine biosynthesis; L-valine from pyruvate: step 2/4. Functionally, involved in the biosynthesis of branched-chain amino acids (BCAA). Catalyzes an alkyl-migration followed by a ketol-acid reduction of (S)-2-acetolactate (S2AL) to yield (R)-2,3-dihydroxy-isovalerate. In the isomerase reaction, S2AL is rearranged via a Mg-dependent methyl migration to produce 3-hydroxy-3-methyl-2-ketobutyrate (HMKB). In the reductase reaction, this 2-ketoacid undergoes a metal-dependent reduction by NADPH to yield (R)-2,3-dihydroxy-isovalerate. This Buchnera aphidicola subsp. Schlechtendalia chinensis protein is Ketol-acid reductoisomerase (NADP(+)).